The sequence spans 357 residues: Protein RecA (357 aa).

73-80 contacts ATP; that stretch reads GPESSGKT.

It belongs to the RecA family.

It localises to the cytoplasm. Its function is as follows. Can catalyze the hydrolysis of ATP in the presence of single-stranded DNA, the ATP-dependent uptake of single-stranded DNA by duplex DNA, and the ATP-dependent hybridization of homologous single-stranded DNAs. It interacts with LexA causing its activation and leading to its autocatalytic cleavage. The protein is Protein RecA of Methylibium petroleiphilum (strain ATCC BAA-1232 / LMG 22953 / PM1).